Consider the following 210-residue polypeptide: Orotate phosphoribosyltransferase (210 aa).

Residues Arg-94, Lys-98, His-100, and 120–128 each bind 5-phospho-alpha-D-ribose 1-diphosphate; that span reads EDLISTGGS. Ser-124 is a binding site for orotate.

The protein belongs to the purine/pyrimidine phosphoribosyltransferase family. PyrE subfamily. Homodimer. Mg(2+) serves as cofactor.

It catalyses the reaction orotidine 5'-phosphate + diphosphate = orotate + 5-phospho-alpha-D-ribose 1-diphosphate. It participates in pyrimidine metabolism; UMP biosynthesis via de novo pathway; UMP from orotate: step 1/2. Functionally, catalyzes the transfer of a ribosyl phosphate group from 5-phosphoribose 1-diphosphate to orotate, leading to the formation of orotidine monophosphate (OMP). This chain is Orotate phosphoribosyltransferase, found in Bacillus cereus (strain G9842).